The sequence spans 220 residues: Glutathione S-transferase (220 aa).

The region spanning 1 to 77 (MLKLHGFSVS…YIEQTQSGKA (77 aa)) is the GST N-terminal domain. Glutathione is bound by residues Tyr12, Val49, and 61 to 62 (ET). Residues 82–211 (DPFEQAKVRE…ADKEASMPAF (130 aa)) form the GST C-terminal domain.

Belongs to the GST superfamily. Monomer and homodimer.

It localises to the cytoplasm. The enzyme catalyses RX + glutathione = an S-substituted glutathione + a halide anion + H(+). Conjugation of reduced glutathione to a wide number of exogenous and endogenous hydrophobic electrophiles. This chain is Glutathione S-transferase, found in Pseudomonas putida (strain ATCC 700007 / DSM 6899 / JCM 31910 / BCRC 17059 / LMG 24140 / F1).